Reading from the N-terminus, the 181-residue chain is MRKRGEIEKKARLQKFMQTTSDLTNLVKMAGLEAYSISHKLKDLEKGIENYEDNNNSTKDTLNQSLKDVIYEITKLSSLIEAKDKIDQRKKLGYQTEQEFDAKFINLKNIKDKLKTLCGKAKGHLGSNLSSVTIDGITKEKVAQAYLIIKLIHKTLIYMNDDSKGSLATILNDLEKDAKSI.

This is an uncharacterized protein from Borreliella burgdorferi (strain ATCC 35210 / DSM 4680 / CIP 102532 / B31) (Borrelia burgdorferi).